Consider the following 502-residue polypeptide: Biotin biosynthesis bifunctional protein BioHC (502 aa).

Residues 1–224 are carboxylesterase; it reads MTRPVLVLVH…IHVIAGSAHA (224 aa). W12 is a substrate binding site. S72 functions as the Nucleophile in the catalytic mechanism. 134 to 138 contributes to the substrate binding site; that stretch reads FTGLL. Catalysis depends on residues D195 and H223. Position 223 (H223) interacts with substrate. Residues 225 to 502 form a malonyl-ACP O-methyltransferase region; sequence VHWSQPQQLI…EVYYLVLCKP (278 aa).

This sequence in the N-terminal section; belongs to the AB hydrolase superfamily. Carboxylesterase BioH family. The protein in the C-terminal section; belongs to the methyltransferase superfamily.

The enzyme catalyses a carboxylic ester + H2O = an alcohol + a carboxylate + H(+). It catalyses the reaction malonyl-[ACP] + S-adenosyl-L-methionine = malonyl-[ACP] methyl ester + S-adenosyl-L-homocysteine. It functions in the pathway cofactor biosynthesis; biotin biosynthesis. Converts the free carboxyl group of a malonyl-thioester to its methyl ester by transfer of a methyl group from S-adenosyl-L-methionine (SAM). It allows to synthesize pimeloyl-ACP via the fatty acid synthetic pathway. Functionally, the physiological role of BioH is to remove the methyl group introduced by BioC when the pimeloyl moiety is complete. It allows to synthesize pimeloyl-ACP via the fatty acid synthetic pathway through the hydrolysis of the ester bonds of pimeloyl-ACP esters. This is Biotin biosynthesis bifunctional protein BioHC (bioC) from Cellvibrio japonicus (strain Ueda107) (Pseudomonas fluorescens subsp. cellulosa).